The sequence spans 71 residues: Small ribosomal subunit protein bS21 (71 aa).

It belongs to the bacterial ribosomal protein bS21 family.

The protein is Small ribosomal subunit protein bS21 of Hydrogenovibrio crunogenus (strain DSM 25203 / XCL-2) (Thiomicrospira crunogena).